We begin with the raw amino-acid sequence, 142 residues long: Deoxyuridine 5'-triphosphate nucleotidohydrolase (142 aa).

This sequence belongs to the dUTPase family. The cofactor is Mg(2+).

It catalyses the reaction dUTP + H2O = dUMP + diphosphate + H(+). Functionally, this enzyme is involved in nucleotide metabolism: it produces dUMP, the immediate precursor of thymidine nucleotides and it decreases the intracellular concentration of dUTP so that uracil cannot be incorporated into DNA. The chain is Deoxyuridine 5'-triphosphate nucleotidohydrolase (DUT) from Swinepox virus (strain Kasza) (SWPV).